A 229-amino-acid polypeptide reads, in one-letter code: B-cell antigen receptor complex-associated protein beta chain (229 aa).

The first 28 residues, 1-28 (MARLALSPVPSHWMVALLLLLSAEPVPA), serve as a signal peptide directing secretion. Topologically, residues 29-159 (ARSEDRYRNP…QLKQRNTLKD (131 aa)) are extracellular. Residues 38 to 138 (PKGSACSRIW…TSEVYQGCGT (101 aa)) form the Ig-like V-type domain. 2 disulfide bridges follow: Cys43-Cys126 and Cys65-Cys122. Asn73, Asn101, Asn127, and Asn128 each carry an N-linked (GlcNAc...) asparagine glycan. Residues 160-180 (GIIMIQTLLIILFIIVPIFLL) form a helical membrane-spanning segment. The Cytoplasmic portion of the chain corresponds to 181–229 (LDKDDSKAGMEEDHTYEGLDIDQTATYEDIVTLRTGEVKWSVGEHPGQE). Positions 185 to 213 (DSKAGMEEDHTYEGLDIDQTATYEDIVTL) constitute an ITAM domain. Tyr196 and Tyr207 each carry phosphotyrosine; by SRC-type Tyr-kinases.

Heterodimer of alpha and beta chains; disulfide-linked. Part of the B-cell antigen receptor complex where the alpha/beta chain heterodimer is non-covalently associated with an antigen-specific membrane-bound surface immunoglobulin of two heavy chains and two light chains. Interacts with LYN. Phosphorylated on tyrosine upon B-cell activation by SRC-type Tyr-kinases such as BLK, LYN and SYK. B-cells.

Its subcellular location is the cell membrane. Functionally, required in cooperation with CD79A for initiation of the signal transduction cascade activated by the B-cell antigen receptor complex (BCR) which leads to internalization of the complex, trafficking to late endosomes and antigen presentation. Enhances phosphorylation of CD79A, possibly by recruiting kinases which phosphorylate CD79A or by recruiting proteins which bind to CD79A and protect it from dephosphorylation. The chain is B-cell antigen receptor complex-associated protein beta chain (CD79B) from Homo sapiens (Human).